The following is a 447-amino-acid chain: Neuronal acetylcholine receptor subunit alpha-10 (447 aa).

An N-terminal signal peptide occupies residues 1-24; sequence MGTRSHYLDLGFLLLLFLPAECLG. The Extracellular segment spans residues 25–237; the sequence is AEGRLAHKLF…FTLLLRRRAA (213 aa). N-linked (GlcNAc...) asparagine glycosylation is found at asparagine 40 and asparagine 56. Disulfide bonds link cysteine 154–cysteine 168 and cysteine 218–cysteine 219. Helical transmembrane passes span 238–258, 268–288, and 302–322; these read AYVC…PLAF, VSLG…LAES, and YMAT…IMNL. At 323-425 the chain is on the cytoplasmic side; sequence HYCGPNAHPV…WKRLARVMDR (103 aa). The chain crosses the membrane as a helical span at residues 426 to 446; the sequence is FFLGIFFCMALVMSLIVLVQA.

This sequence belongs to the ligand-gated ion channel (TC 1.A.9) family. Acetylcholine receptor (TC 1.A.9.1) subfamily. Alpha-10/CHRNA10 sub-subfamily. As to quaternary structure, forms homo- or heterooligomeric channels in conjunction with CHRNA10. The native outer hair cell receptor may be composed of CHRNA9:CHRNA10 heterooligomers. Found in the stoichiometric form (CHRNA9)2:(CHRNA10)3. Expressed in the outer hair cells of the cochlea and the neurons of dorsal root ganglia.

It localises to the synaptic cell membrane. The protein resides in the cell membrane. It carries out the reaction Ca(2+)(in) = Ca(2+)(out). It catalyses the reaction Mg(2+)(in) = Mg(2+)(out). The enzyme catalyses K(+)(in) = K(+)(out). The catalysed reaction is Na(+)(in) = Na(+)(out). With respect to regulation, activated by a myriad of ligands such as acetylcholine. AChR activity is inhibited by the antagonist alpha-conotoxins RgIA and GeXXA, small disulfide-constrained peptides from cone snails. In terms of biological role, component of neuronal acetylcholine receptors (nAChRs) that function as pentameric, ligand-gated cation channels with high calcium permeability among other activities. nAChRs are excitatory neurotrasnmitter receptors formed by a collection of nAChR subunits known to mediate synaptic transmission in the nervous system and the neuromuscular junction. Each nAchR subunit confers differential attributes to channel properties, including activation, deactivation and desensitization kinetics, pH sensitivity, cation permeability, and binding to allosteric modulators. Forms heteropentamers with CHRNA9. Expressed in the inner ear, in sympathetic neurons and in other non-neuronal cells, such as skin keratinocytes and lymphocytes. nAChR formed by CHRNA9:CHRNA10 mediate central nervous system control of auditory and vestibular sensory processing. The channel is permeable to a range of divalent cations including calcium, the influx of which may activate a potassium current which hyperpolarizes the cell membrane. In the ear, mediates synaptic transmission between efferent olivocochlear fibers and hair cells of the cochlea, this may lead to a reduction in basilar membrane motion, altering the activity of auditory nerve fibers and reducing the range of dynamic hearing. This may protect against acoustic trauma. May also regulate keratinocyte adhesion. This Rattus norvegicus (Rat) protein is Neuronal acetylcholine receptor subunit alpha-10 (Chrna10).